Reading from the N-terminus, the 428-residue chain is Endoplasmic reticulum junction formation protein lunapark (428 aa).

The N-myristoyl glycine moiety is linked to residue glycine 2. At 2–45 (GGLFSRWRTKLSTVEVLESIDKEIQALEEFREKNQRLQKLRVGR) the chain is on the cytoplasmic side. Positions 16-43 (EVLESIDKEIQALEEFREKNQRLQKLRV) form a coiled coil. Residues 46-66 (LILYSSVLYLFTCLIVYLWYL) form a helical membrane-spanning segment. Residues 67–77 (PDEFTARLAMT) lie on the Lumenal side of the membrane. A helical membrane pass occupies residues 78-98 (LPFFAFPLIIWSIRTVIIFFF). The Cytoplasmic portion of the chain corresponds to 99–428 (SKRTERNNEA…ELNGESLTAE (330 aa)). Positions 102-128 (TERNNEALDDLKSQRKKILEEVMEKET) form a coiled coil. Residues serine 114, serine 153, serine 177, serine 182, and serine 194 each carry the phosphoserine modification. A disordered region spans residues 143–248 (SKKAKECEPP…PPGPPLARPI (106 aa)). Pro residues predominate over residues 185-198 (QGPPPQVPVSPGPP). Residues threonine 211 and threonine 213 each carry the phosphothreonine modification. Residues serine 217 and serine 227 each carry the phosphoserine modification. The C4-type; plays a role in ER morphology zinc finger occupies 276–301 (CQQCFSHNGMALKEEFEYIAFRCAYC). Phosphoserine occurs at positions 321, 353, and 384. A disordered region spans residues 361–428 (NNTEQTDDKI…ELNGESLTAE (68 aa)). Residues 386–401 (SEEPEEKQETENEEAS) show a composition bias toward acidic residues. Serine 414 bears the Phosphoserine mark.

Belongs to the lunapark family. In terms of assembly, homodimer; homodimerization requires the C4-type zinc finger motif and decreases during mitosis in a phosphorylation-dependent manner. Post-translationally, myristoylated; myristoylation is necessary for the endoplasmic reticulum (ER) three-way ER tubular junction formation, but is not required neither for membrane translocation, membrane topology formation, nor for the specific localization to ER membranes. In terms of processing, phosphorylated. Phosphorylation occurs at Ser-177, Ser-182, Ser-217, Ser-227, Ser-321 and Ser-384 during interphase. Phosphorylation occurs at Ser-114, Ser-153, Ser-194, Thr-211 and Ser-353 during mitosis; these phosphorylations reduce both its homodimerization and the ER three-way tubular junction formation. Subject to proteasomal degradation following phosphorylation during mitosis.

It is found in the endoplasmic reticulum membrane. In terms of biological role, endoplasmic reticulum (ER)-shaping membrane protein that plays a role in determining ER morphology. Involved in the stabilization of nascent three-way ER tubular junctions within the ER network. May also play a role as a curvature-stabilizing protein within three-way ER tubular junction network. May be involved in limb and central nervous system development. The protein is Endoplasmic reticulum junction formation protein lunapark of Pongo abelii (Sumatran orangutan).